We begin with the raw amino-acid sequence, 339 residues long: F420-dependent glucose-6-phosphate dehydrogenase (339 aa).

A coenzyme F420-(gamma-Glu)n-binding site is contributed by Asp41. His42 serves as the catalytic Proton donor. Coenzyme F420-(gamma-Glu)n is bound by residues Thr78 and 109 to 110 (TG). The Proton acceptor role is filled by Glu111. Residues Asn114, 177–178 (SG), and 180–181 (AA) each bind coenzyme F420-(gamma-Glu)n. Substrate-binding residues include Thr195, Lys198, Lys259, and Arg283.

It belongs to the F420-dependent glucose-6-phosphate dehydrogenase family. In terms of assembly, homodimer.

It carries out the reaction oxidized coenzyme F420-(gamma-L-Glu)(n) + D-glucose 6-phosphate + H(+) = 6-phospho-D-glucono-1,5-lactone + reduced coenzyme F420-(gamma-L-Glu)(n). Its function is as follows. Catalyzes the coenzyme F420-dependent oxidation of glucose 6-phosphate (G6P) to 6-phosphogluconolactone. In Nakamurella multipartita (strain ATCC 700099 / DSM 44233 / CIP 104796 / JCM 9543 / NBRC 105858 / Y-104) (Microsphaera multipartita), this protein is F420-dependent glucose-6-phosphate dehydrogenase.